Consider the following 104-residue polypeptide: UPF0212 protein PH1312 (104 aa).

Belongs to the UPF0212 family.

The polypeptide is UPF0212 protein PH1312 (Pyrococcus horikoshii (strain ATCC 700860 / DSM 12428 / JCM 9974 / NBRC 100139 / OT-3)).